Reading from the N-terminus, the 275-residue chain is Lectin (275 aa).

The N-terminal stretch at 1–30 is a signal peptide; that stretch reads MASLQTQMISFYLIFLSILLTTIFFFKVNS. Positions 111 and 129 each coordinate D-glucose. Mn(2+)-binding residues include glutamate 149 and aspartate 151. Ca(2+) contacts are provided by aspartate 151, phenylalanine 153, asparagine 155, and aspartate 159. Mn(2+) is bound by residues aspartate 159 and histidine 166. A propeptide spanning residues 211-217 is cleaved from the precursor; sequence NSLEEEN. Residues glycine 246 and alanine 247 each contribute to the D-glucose site. A propeptide spanning residues 270–275 is cleaved from the precursor; that stretch reads KQAADA.

This sequence belongs to the leguminous lectin family. In terms of assembly, heterotetramer of two alpha and two beta chains. Post-translationally, the mature form consists of two chains, alpha and beta, produced by cleavage of the immature protein. These remain cleaved, yet fold together to form one subunit.

In terms of biological role, D-mannose specific lectin. This chain is Lectin, found in Lens culinaris (Lentil).